The following is a 708-amino-acid chain: Solute carrier family 15 member 1 (708 aa).

Residues 1–21 (MGMSKSYGCFGYPLSIFFIVV) form a helical membrane-spanning segment. The Extracellular segment spans residues 22-53 (NEFCERFSYYGMRALLILYFRRFIGWDDNLST). The N-linked (GlcNAc...) asparagine glycan is linked to N50. Residues 54–74 (AIYHTFVALCYLTPILGALIA) form a helical membrane-spanning segment. Over 75–82 (DSWLGKFK) the chain is Cytoplasmic. The chain crosses the membrane as a helical span at residues 83 to 103 (TIVSLSIVYTIGQAVTAVSSI). At 104 to 118 (NDLTDYNKDGTPDNL) the chain is on the extracellular side. N-linked (GlcNAc...) asparagine glycosylation is present at N117. Residues 119–139 (SVHVALSMIGLALIALGTGGI) traverse the membrane as a helical segment. Residues 140–161 (KPCVSAFGGDQFEEGQEKQRNR) lie on the Cytoplasmic side of the membrane. The helical transmembrane segment at 162 to 182 (FFSIFYLAINAGSLISTIVTP) threads the bilayer. The Extracellular segment spans residues 183–198 (MLRVHECGIYSQKACY). The helical transmembrane segment at 199–219 (PLAFGVPAALMAVSLIVFVIG) threads the bilayer. Residues 220–276 (SGMYKKFQPQGNVMGKVVKCIGFALKNRFRHRSKQFPKREHWLDWAKEKYDERLISQ) lie on the Cytoplasmic side of the membrane. A helical membrane pass occupies residues 277 to 297 (IKMVTKVMFLYIPLPMFWALF). The Extracellular portion of the chain corresponds to 298-327 (DQQGSRWTLQATAMSGKIGLLEVQPDQMQT). The helical transmembrane segment at 328-348 (VNAILIVVMVPIMDAVVYPLI) threads the bilayer. The Cytoplasmic segment spans residues 349 to 361 (AKCGFNFTSLKRM). The chain crosses the membrane as a helical span at residues 362–382 (TVGMFLASMAFVMAAIVQLEI). Residues 383 to 584 (DKTLPVFPKQ…ISPNTVNMAL (202 aa)) lie on the Extracellular side of the membrane. The extracellular domain (ECD) stretch occupies residues 383 to 585 (DKTLPVFPKQ…SPNTVNMALQ (203 aa)). N-linked (GlcNAc...) asparagine glycans are attached at residues N408, N439, N495, N499, N509, N514, N527, and N539. The helical transmembrane segment at 585–605 (QIPQYFLITCGEVVFSVTGLE) threads the bilayer. Residues 606-619 (FSYSQAPSNMKSVL) lie on the Cytoplasmic side of the membrane. The chain crosses the membrane as a helical span at residues 620-640 (QAGWLLTVAVGNIIVLIVAGA). The Extracellular segment spans residues 641–645 (GQFSE). Residues 646-666 (QWAEYILFAALLLVVCVIFAI) form a helical membrane-spanning segment. Over 667–708 (MARFYTYVNPAEIEAQFDDDEKKNLEKMNVYSTVTPVSQTQM) the chain is Cytoplasmic.

It belongs to the major facilitator superfamily. Proton-dependent oligopeptide transporter (POT/PTR) (TC 2.A.17) family. In terms of assembly, interacts (via extracellular domain region) with trypsin.

The protein localises to the apical cell membrane. The enzyme catalyses a dipeptide(out) + H(+)(out) = a dipeptide(in) + H(+)(in). The catalysed reaction is an L-amino acid tripeptide(out) + H(+)(out) = an L-amino acid tripeptide(in) + H(+)(in). It carries out the reaction L-alanyl-L-lysine(out) + H(+)(out) = L-alanyl-L-lysine(in) + H(+)(in). It catalyses the reaction L-alanyl-L-proline(out) + H(+)(out) = L-alanyl-L-proline(in) + H(+)(in). The enzyme catalyses L-alanyl-L-valine(out) + H(+)(out) = L-alanyl-L-valine(in) + H(+)(in). The catalysed reaction is carnosine(out) + H(+)(out) = carnosine(in) + H(+)(in). It carries out the reaction glycyl-L-glutamine(out) + H(+)(out) = glycyl-L-glutamine(in) + H(+)(in). It catalyses the reaction glycyl-L-leucine(out) + H(+)(out) = glycyl-L-leucine(in) + H(+)(in). The enzyme catalyses glycyl-L-proline(out) + H(+)(out) = glycyl-L-proline(in) + H(+)(in). The catalysed reaction is glycyl-sarcosine(out) + H(+)(out) = glycyl-sarcosine(in) + H(+)(in). It carries out the reaction L-leucyl-L-leucine(out) + H(+)(out) = L-leucyl-L-leucine(in) + H(+)(in). It catalyses the reaction L-leucyl-L-proline(out) + H(+)(out) = L-leucyl-L-proline(in) + H(+)(in). The enzyme catalyses L-phenylalanyl-L-leucine(out) + H(+)(out) = L-phenylalanyl-L-leucine(in) + H(+)(in). The catalysed reaction is L-phenylalanyl-L-phenylalanine(out) + H(+)(out) = L-phenylalanyl-L-phenylalanine(in) + H(+)(in). It carries out the reaction L-lysyl-glycine(out) + H(+)(out) = L-lysyl-glycine(in) + H(+)(in). It catalyses the reaction L-tyrosylglycine(out) + H(+)(out) = L-tyrosylglycine(in) + H(+)(in). The enzyme catalyses L-alanyl-L-aspartate(out) + 2 H(+)(out) = L-alanyl-L-aspartate(in) + 2 H(+)(in). The catalysed reaction is L-aspartyl-glycine(out) + 2 H(+)(out) = L-aspartyl-glycine(in) + 2 H(+)(in). It carries out the reaction glycyl-L-aspartate(out) + 2 H(+)(out) = glycyl-L-aspartate(in) + 2 H(+)(in). It catalyses the reaction glycyl-L-glutamate(out) + 2 H(+)(out) = glycyl-L-glutamate(in) + 2 H(+)(in). The enzyme catalyses L-alanyl-L-leucyl-L-alanine(out) + H(+)(out) = L-alanyl-L-leucyl-L-alanine(in) + H(+)(in). The catalysed reaction is L-alanyl-L-prolylglycine(out) + H(+)(out) = L-alanyl-L-prolylglycine(in) + H(+)(in). It carries out the reaction glycylglycyl-L-isoleucine(out) + H(+)(out) = glycylglycyl-L-isoleucine(in) + H(+)(in). It catalyses the reaction glycylglycyl-L-proline(out) + H(+)(out) = glycylglycyl-L-proline(in) + H(+)(in). The enzyme catalyses L-methionyl-L-phenylalanyl-L-methionine(out) + H(+)(out) = L-methionyl-L-phenylalanyl-L-methionine(in) + H(+)(in). The catalysed reaction is N-acetyl-D-muramoyl-L-alanyl-D-isoglutamine(out) + 2 H(+)(out) = N-acetyl-D-muramoyl-L-alanyl-D-isoglutamine(in) + 2 H(+)(in). It carries out the reaction N(alpha)-formyl-L-methionyl-L-leucyl-L-phenylalanine(out) + 2 H(+)(out) = N(alpha)-formyl-L-methionyl-L-leucyl-L-phenylalanine(in) + 2 H(+)(in). Its function is as follows. Electrogenic proton-coupled amino-acid transporter that transports oligopeptides of 2 to 4 amino acids with a preference for dipeptides. Transports neutral and monovalently charged peptides with a proton to peptide stoichiometry of 1:1 or 2:1. Primarily responsible for the absorption of dietary di- and tripeptides from the small intestinal lumen. Mediates transepithelial transport of muramyl and N-formylated bacterial dipeptides contributing to recognition of pathogenic bacteria by the mucosal immune system. This is Solute carrier family 15 member 1 (SLC15A1) from Canis lupus familiaris (Dog).